An 83-amino-acid polypeptide reads, in one-letter code: U5-theraphotoxin-Hs1a 4 (83 aa).

The first 21 residues, 1–21, serve as a signal peptide directing secretion; that stretch reads MKTSMFLTLTGLVLLFVDCYA. A propeptide spanning residues 22–49 is cleaved from the precursor; the sequence is SESEEKEFPKELLSSIFAADSDFKVEER. Cystine bridges form between cysteine 51/cysteine 63, cysteine 56/cysteine 68, and cysteine 62/cysteine 75.

This sequence belongs to the neurotoxin 10 (Hwtx-1) family. 51 (Hntx-8) subfamily. Hntx-8 sub-subfamily. In terms of tissue distribution, expressed by the venom gland.

The protein resides in the secreted. Agglutinates erythrocytes. This chain is U5-theraphotoxin-Hs1a 4, found in Cyriopagopus schmidti (Chinese bird spider).